The chain runs to 369 residues: Phenylalanine--tRNA ligase alpha subunit (369 aa).

Position 269 (Glu-269) interacts with Mg(2+).

This sequence belongs to the class-II aminoacyl-tRNA synthetase family. Phe-tRNA synthetase alpha subunit type 1 subfamily. In terms of assembly, tetramer of two alpha and two beta subunits. Mg(2+) is required as a cofactor.

The protein localises to the cytoplasm. It catalyses the reaction tRNA(Phe) + L-phenylalanine + ATP = L-phenylalanyl-tRNA(Phe) + AMP + diphosphate + H(+). The chain is Phenylalanine--tRNA ligase alpha subunit from Brucella anthropi (strain ATCC 49188 / DSM 6882 / CCUG 24695 / JCM 21032 / LMG 3331 / NBRC 15819 / NCTC 12168 / Alc 37) (Ochrobactrum anthropi).